Here is a 331-residue protein sequence, read N- to C-terminus: Sucrose operon repressor (331 aa).

Residues M1–A56 enclose the HTH lacI-type domain. Residues L4 to H23 constitute a DNA-binding region (H-T-H motif).

Functionally, repressor for the csc operon. Binds D-fructose as an inducer. This Escherichia coli protein is Sucrose operon repressor (cscR).